The sequence spans 117 residues: DNA-directed RNA polymerase subunit omega (117 aa).

Residues 96–105 (KEEAEEEAKQ) show a composition bias toward basic and acidic residues. Residues 96–117 (KEEAEEEAKQKNSRAAKAAAAE) are disordered. The span at 108–117 (SRAAKAAAAE) shows a compositional bias: low complexity.

Belongs to the RNA polymerase subunit omega family. As to quaternary structure, the RNAP catalytic core consists of 2 alpha, 1 beta, 1 beta' and 1 omega subunit. When a sigma factor is associated with the core the holoenzyme is formed, which can initiate transcription.

The catalysed reaction is RNA(n) + a ribonucleoside 5'-triphosphate = RNA(n+1) + diphosphate. Promotes RNA polymerase assembly. Latches the N- and C-terminal regions of the beta' subunit thereby facilitating its interaction with the beta and alpha subunits. This is DNA-directed RNA polymerase subunit omega from Lactococcus lactis subsp. cremoris (strain SK11).